Here is a 181-residue protein sequence, read N- to C-terminus: Ribonuclease HII (181 aa).

One can recognise an RNase H type-2 domain in the interval 1 to 181 (MICGIDEVGR…SLHRKNFKLI (181 aa)). Residues aspartate 6, glutamate 7, and aspartate 98 each contribute to the a divalent metal cation site.

The protein belongs to the RNase HII family. The cofactor is Mn(2+). Requires Mg(2+) as cofactor.

Its subcellular location is the cytoplasm. It catalyses the reaction Endonucleolytic cleavage to 5'-phosphomonoester.. In terms of biological role, endonuclease that specifically degrades the RNA of RNA-DNA hybrids. The sequence is that of Ribonuclease HII (rnhB) from Borreliella burgdorferi (strain ATCC 35210 / DSM 4680 / CIP 102532 / B31) (Borrelia burgdorferi).